Reading from the N-terminus, the 404-residue chain is Cysteine desulfurase IscS (404 aa).

Residues 75–76 (AT), asparagine 155, glutamine 183, and 203–205 (SAH) contribute to the pyridoxal 5'-phosphate site. Lysine 206 is subject to N6-(pyridoxal phosphate)lysine. Threonine 243 lines the pyridoxal 5'-phosphate pocket. Catalysis depends on cysteine 328, which acts as the Cysteine persulfide intermediate. Cysteine 328 provides a ligand contact to [2Fe-2S] cluster.

It belongs to the class-V pyridoxal-phosphate-dependent aminotransferase family. NifS/IscS subfamily. In terms of assembly, homodimer. Forms a heterotetramer with IscU, interacts with other sulfur acceptors. The cofactor is pyridoxal 5'-phosphate.

The protein localises to the cytoplasm. It carries out the reaction (sulfur carrier)-H + L-cysteine = (sulfur carrier)-SH + L-alanine. Its pathway is cofactor biosynthesis; iron-sulfur cluster biosynthesis. Functionally, master enzyme that delivers sulfur to a number of partners involved in Fe-S cluster assembly, tRNA modification or cofactor biosynthesis. Catalyzes the removal of elemental sulfur atoms from cysteine to produce alanine. Functions as a sulfur delivery protein for Fe-S cluster synthesis onto IscU, an Fe-S scaffold assembly protein, as well as other S acceptor proteins. This is Cysteine desulfurase IscS from Shewanella sediminis (strain HAW-EB3).